Here is a 489-residue protein sequence, read N- to C-terminus: Betaine aldehyde dehydrogenase (489 aa).

K(+)-binding residues include threonine 26 and aspartate 93. Glycine 150–tryptophan 152 serves as a coordination point for NAD(+). The Charge relay system role is filled by lysine 162. Residue lysine 176–glutamate 179 participates in NAD(+) binding. Valine 180 lines the K(+) pocket. Position 229-232 (glycine 229–threonine 232) interacts with NAD(+). Leucine 245 is a binding site for K(+). Glutamate 251 functions as the Proton acceptor in the catalytic mechanism. NAD(+) is bound by residues glycine 253, cysteine 285, and glutamate 386. The active-site Nucleophile is cysteine 285. Residue cysteine 285 is modified to Cysteine sulfenic acid (-SOH). 2 residues coordinate K(+): lysine 456 and glycine 459. Glutamate 463 (charge relay system) is an active-site residue.

Belongs to the aldehyde dehydrogenase family. As to quaternary structure, dimer of dimers. Requires K(+) as cofactor.

The enzyme catalyses betaine aldehyde + NAD(+) + H2O = glycine betaine + NADH + 2 H(+). It participates in amine and polyamine biosynthesis; betaine biosynthesis via choline pathway; betaine from betaine aldehyde: step 1/1. Involved in the biosynthesis of the osmoprotectant glycine betaine. Catalyzes the irreversible oxidation of betaine aldehyde to the corresponding acid. The sequence is that of Betaine aldehyde dehydrogenase from Burkholderia lata (strain ATCC 17760 / DSM 23089 / LMG 22485 / NCIMB 9086 / R18194 / 383).